Consider the following 120-residue polypeptide: Large ribosomal subunit protein uL18 (120 aa).

Belongs to the universal ribosomal protein uL18 family. Part of the 50S ribosomal subunit; part of the 5S rRNA/L5/L18/L25 subcomplex. Contacts the 5S and 23S rRNAs.

Functionally, this is one of the proteins that bind and probably mediate the attachment of the 5S RNA into the large ribosomal subunit, where it forms part of the central protuberance. The polypeptide is Large ribosomal subunit protein uL18 (Chloroflexus aggregans (strain MD-66 / DSM 9485)).